A 367-amino-acid chain; its full sequence is DNA replication and repair protein RecF (367 aa).

30–37 (GANGSGKT) contributes to the ATP binding site.

The protein belongs to the RecF family.

The protein localises to the cytoplasm. Functionally, the RecF protein is involved in DNA metabolism; it is required for DNA replication and normal SOS inducibility. RecF binds preferentially to single-stranded, linear DNA. It also seems to bind ATP. The chain is DNA replication and repair protein RecF from Pseudomonas putida (strain ATCC 47054 / DSM 6125 / CFBP 8728 / NCIMB 11950 / KT2440).